We begin with the raw amino-acid sequence, 192 residues long: Large ribosomal subunit protein bL25 (192 aa).

Belongs to the bacterial ribosomal protein bL25 family. CTC subfamily. In terms of assembly, part of the 50S ribosomal subunit; part of the 5S rRNA/L5/L18/L25 subcomplex. Contacts the 5S rRNA. Binds to the 5S rRNA independently of L5 and L18.

In terms of biological role, this is one of the proteins that binds to the 5S RNA in the ribosome where it forms part of the central protuberance. The sequence is that of Large ribosomal subunit protein bL25 from Porphyromonas gingivalis (strain ATCC 33277 / DSM 20709 / CIP 103683 / JCM 12257 / NCTC 11834 / 2561).